Consider the following 100-residue polypeptide: Integration host factor subunit alpha (100 aa).

The protein belongs to the bacterial histone-like protein family. As to quaternary structure, heterodimer of an alpha and a beta chain.

This protein is one of the two subunits of integration host factor, a specific DNA-binding protein that functions in genetic recombination as well as in transcriptional and translational control. This is Integration host factor subunit alpha (ihfA) from Zymomonas mobilis subsp. mobilis (strain ATCC 31821 / ZM4 / CP4).